Consider the following 343-residue polypeptide: Calcium/calmodulin-dependent protein kinase type 1B (343 aa).

Residues Y15–I270 enclose the Protein kinase domain. ATP-binding positions include L21–V29 and K44. Catalysis depends on D136, which acts as the Proton acceptor. The interval K290–R311 is calmodulin-binding. The tract at residues G319–W343 is disordered.

It belongs to the protein kinase superfamily. CAMK Ser/Thr protein kinase family. CaMK subfamily. Post-translationally, phosphorylated by CAMKK1.

It localises to the cytoplasm. The protein localises to the nucleus. It carries out the reaction L-seryl-[protein] + ATP = O-phospho-L-seryl-[protein] + ADP + H(+). The enzyme catalyses L-threonyl-[protein] + ATP = O-phospho-L-threonyl-[protein] + ADP + H(+). Activated by Ca(2+)/calmodulin. In terms of biological role, calcium/calmodulin-dependent protein kinase belonging to a proposed calcium-triggered signaling cascade. In vitro phosphorylates CREB1 and SYN1/synapsin I. Phosphorylates and activates CAMK1. The polypeptide is Calcium/calmodulin-dependent protein kinase type 1B (PNCK) (Homo sapiens (Human)).